Consider the following 261-residue polypeptide: CD40 ligand (261 aa).

At 1-22 (MIETYNQTSPRSAATGLPISMK) the chain is on the cytoplasmic side. A helical; Signal-anchor for type II membrane protein membrane pass occupies residues 23–46 (IFMYLLTVFLITQMIGSALFAVYL). At 47 to 261 (HRRLDKIEDE…GFTSFGLLKL (215 aa)) the chain is on the extracellular side. Residues 122–261 (IAAHVISEAS…GFTSFGLLKL (140 aa)) form the THD domain. A disulfide bond links Cys-178 and Cys-218. The N-linked (GlcNAc...) (complex) asparagine; alternate glycan is linked to Asn-240. N-linked (GlcNAc...) (high mannose) asparagine; alternate glycosylation is present at Asn-240.

The protein belongs to the tumor necrosis factor family. In terms of assembly, homotrimer. Interacts with isoform 3 of CD28. CD40 ligand, soluble form: Exists as either a monomer or a homotrimer. Forms a ternary complex between CD40 and integrins for CD40-CD40LG signaling. In terms of processing, the soluble form derives from the membrane form by proteolytic processing. N-linked glycan is a mixture of high mannose and complex type. Glycan structure does not influence binding affinity to CD40. Post-translationally, not O-glycosylated. Specifically expressed on activated CD4+ T-lymphocytes.

The protein resides in the cell membrane. The protein localises to the cell surface. It is found in the secreted. Its function is as follows. Cytokine that acts as a ligand to CD40/TNFRSF5. Costimulates T-cell proliferation and cytokine production. Its cross-linking on T-cells generates a costimulatory signal which enhances the production of IL4 and IL10 in conjunction with the TCR/CD3 ligation and CD28 costimulation. Induces the activation of NF-kappa-B. Induces the activation of kinases MAPK8 and PAK2 in T-cells. Induces tyrosine phosphorylation of isoform 3 of CD28. Mediates B-cell proliferation in the absence of co-stimulus as well as IgE production in the presence of IL4. Involved in immunoglobulin class switching. In terms of biological role, acts as a ligand for integrins, specifically ITGA5:ITGB1 and ITGAV:ITGB3; both integrins and the CD40 receptor are required for activation of CD40-CD40LG signaling, which have cell-type dependent effects, such as B-cell activation, NF-kappa-B signaling and anti-apoptotic signaling. The polypeptide is CD40 ligand (CD40LG) (Homo sapiens (Human)).